The following is a 571-amino-acid chain: Dehydrocurvularin exporter (571 aa).

Residues M1–D34 are disordered. Basic and acidic residues predominate over residues E8 to R17. The segment covering Q19–Q28 has biased composition (polar residues). N25 carries an N-linked (GlcNAc...) asparagine glycan. The next 14 membrane-spanning stretches (helical) occupy residues I47–I67, W86–F106, F120–I140, A143–V163, L171–G191, W202–L222, I238–T258, V275–F295, L317–F337, V350–I370, F379–V399, M405–M425, I443–F463, and V514–F534. A disordered region spans residues P538–S571.

It belongs to the major facilitator superfamily. TCR/Tet family.

It localises to the cell membrane. Its function is as follows. Efflux pump that is probably involved in the export of dehydrocurvularin. The sequence is that of Dehydrocurvularin exporter from Aspergillus terreus.